We begin with the raw amino-acid sequence, 711 residues long: Polyribonucleotide nucleotidyltransferase (711 aa).

Mg(2+) is bound by residues Asp-494 and Asp-500. Residues 560–620 (PKIEIFGVDP…INVENAKSDI (61 aa)) enclose the KH domain. Positions 651–710 (GEEFDGVVKKIMDFGAFISLKDGIDGLLHVSKIKTQLSEGDTLRVKVEEIKRGKISLELC) constitute an S1 motif domain.

Belongs to the polyribonucleotide nucleotidyltransferase family. Mg(2+) is required as a cofactor.

The protein localises to the cytoplasm. The enzyme catalyses RNA(n+1) + phosphate = RNA(n) + a ribonucleoside 5'-diphosphate. Functionally, involved in mRNA degradation. Catalyzes the phosphorolysis of single-stranded polyribonucleotides processively in the 3'- to 5'-direction. The sequence is that of Polyribonucleotide nucleotidyltransferase from Campylobacter hominis (strain ATCC BAA-381 / DSM 21671 / CCUG 45161 / LMG 19568 / NCTC 13146 / CH001A).